The sequence spans 229 residues: Potassium/proton antiporter CemA (229 aa).

3 consecutive transmembrane segments (helical) span residues 7–27 (LTPF…SLSF), 106–126 (LILH…YSIL), and 193–213 (LVST…FLFL).

The protein belongs to the CemA family.

Its subcellular location is the plastid. The protein localises to the chloroplast inner membrane. It catalyses the reaction K(+)(in) + H(+)(out) = K(+)(out) + H(+)(in). Contributes to K(+)/H(+) antiport activity by supporting proton efflux to control proton extrusion and homeostasis in chloroplasts in a light-dependent manner to modulate photosynthesis. Prevents excessive induction of non-photochemical quenching (NPQ) under continuous-light conditions. Indirectly promotes efficient inorganic carbon uptake into chloroplasts. This chain is Potassium/proton antiporter CemA, found in Illicium oligandrum (Star anise).